A 1437-amino-acid chain; its full sequence is uncharacterized protein (1437 aa).

Residues 1 to 25 form the signal peptide; it reads MRRGCRHHLAAVVLLIATFPPLAYN. Residues 26–1326 are Extracellular-facing; the sequence is QNIGGINQNI…SRIKENYFKW (1301 aa). N-linked (GlcNAc...) asparagine glycosylation is found at Asn-103, Asn-315, Asn-364, Asn-492, Asn-605, Asn-676, and Asn-914. An NIDO domain is found at 193 to 356; the sequence is AFFGQQASQA…GRYMFRVDDV (164 aa). The AMOP domain occupies 648 to 829; that stretch reads VKEKSREMCH…FRCQMFYWRR (182 aa). The chain crosses the membrane as a helical span at residues 1327 to 1347; that stretch reads LAVIAGIVGIIIVILLIFLVF. Topologically, residues 1348-1437 are cytoplasmic; sequence WCIKRKKLQE…QGMLGLNTSV (90 aa). Residues 1394 to 1419 are disordered; that stretch reads PRTVAMPPPRGTTATPMTLEPRGFSP.

The protein localises to the membrane. This is an uncharacterized protein from Caenorhabditis elegans.